A 235-amino-acid chain; its full sequence is Uracil-DNA glycosylase (235 aa).

Asp71 serves as the catalytic Proton acceptor.

This sequence belongs to the uracil-DNA glycosylase (UDG) superfamily. UNG family.

It localises to the cytoplasm. The catalysed reaction is Hydrolyzes single-stranded DNA or mismatched double-stranded DNA and polynucleotides, releasing free uracil.. Excises uracil residues from the DNA which can arise as a result of misincorporation of dUMP residues by DNA polymerase or due to deamination of cytosine. This is Uracil-DNA glycosylase from Helicobacter hepaticus (strain ATCC 51449 / 3B1).